A 194-amino-acid chain; its full sequence is MPQTEQIHQHSVLRDIIRSRRSIRKFKQEPVPSAVILDMLETAKYAPNHRVTEPWRFIYVSSETGKANLINTFAAFSKKSKPDMTEEKLQNFKNTLGRVPGFLLVVFQEDENERARDDDFAATSSLIQNLQLLAWEKGIGMVWKSGKILYDKEVHQAFGLQDNERFAAIIQTGYPDEAPEVKKRTPIRDRFTEM.

FMN contacts are provided by residues 20–22 (RRS), 147–148 (KI), and R188.

This sequence belongs to the nitroreductase family. Requires FMN as cofactor.

The sequence is that of Putative NAD(P)H nitroreductase YfhC (yfhC) from Bacillus subtilis (strain 168).